A 505-amino-acid chain; its full sequence is Tyrosine-protein kinase Blk (505 aa).

A disordered region spans residues 1 to 37; that stretch reads MGLVSSKKPDKEKPIKEKDKGQWSPLKVSAQDKDAPP. Residue glycine 2 is the site of N-myristoyl glycine attachment. Over residues 7–21 the composition is skewed to basic and acidic residues; that stretch reads KKPDKEKPIKEKDKG. Residues 58 to 118 enclose the SH3 domain; that stretch reads EDKHFVVALY…PSNFVARVES (61 aa). The 97-residue stretch at 124-220 folds into the SH2 domain; it reads WFFRSQGRKE…GLCQRLTLPC (97 aa). A Protein kinase domain is found at 241–494; sequence LRLVRKLGSG…FLQSVLEDFY (254 aa). ATP contacts are provided by residues 247 to 255 and lysine 269; that span reads LGSGQFGEV. The active-site Proton acceptor is the aspartate 360. Tyrosine 389 carries the phosphotyrosine; by autocatalysis modification.

It belongs to the protein kinase superfamily. Tyr protein kinase family. SRC subfamily. As to quaternary structure, interacts with CBL (via SH2 domain). Interacts with CD79A and CD79B (via SH2 domain). In terms of processing, phosphorylated on tyrosine residues after antibody-mediated surface engagement of the B-cell antigen receptor (BCR). Post-translationally, ubiquitination of activated BLK by the UBE3A ubiquitin protein ligase leads to its degradation by the ubiquitin-proteasome pathway. In terms of tissue distribution, expressed in lymphatic organs, pancreatic islets, Leydig cells, striate ducts of salivary glands and hair follicles.

The protein resides in the cell membrane. The enzyme catalyses L-tyrosyl-[protein] + ATP = O-phospho-L-tyrosyl-[protein] + ADP + H(+). Its activity is regulated as follows. Antibody-mediated surface engagement of the B-cell antigen receptor (BCR) which results in the phosphorylation of BLK on tyrosine residues, stimulates the enzymatic activity. In terms of biological role, non-receptor tyrosine kinase involved in B-lymphocyte development, differentiation and signaling. B-cell receptor (BCR) signaling requires a tight regulation of several protein tyrosine kinases and phosphatases, and associated coreceptors. Binding of antigen to the B-cell antigen receptor (BCR) triggers signaling that ultimately leads to B-cell activation. Signaling through BLK plays an important role in transmitting signals through surface immunoglobulins and supports the pro-B to pre-B transition, as well as the signaling for growth arrest and apoptosis downstream of B-cell receptor. Specifically binds and phosphorylates CD79A at 'Tyr-188'and 'Tyr-199', as well as CD79B at 'Tyr-196' and 'Tyr-207'. Also phosphorylates the immunoglobulin G receptors FCGR2A, FCGR2B and FCGR2C. With FYN and LYN, plays an essential role in pre-B-cell receptor (pre-BCR)-mediated NF-kappa-B activation. Also contributes to BTK activation by indirectly stimulating BTK intramolecular autophosphorylation. In pancreatic islets, acts as a modulator of beta-cells function through the up-regulation of PDX1 and NKX6-1 and consequent stimulation of insulin secretion in response to glucose. Phosphorylates CGAS, promoting retention of CGAS in the cytosol. The chain is Tyrosine-protein kinase Blk (BLK) from Homo sapiens (Human).